Consider the following 172-residue polypeptide: L-methionine sulfoximine/L-methionine sulfone acetyltransferase (172 aa).

One can recognise an N-acetyltransferase domain in the interval 3–166 (ASIRDAGVAD…DLTFMQLNLD (164 aa)). Substrate is bound by residues 75-77 (RPF) and 85-87 (EHS). Acetyl-CoA is bound by residues 88 to 90 (VYV), 96 to 101 (GKGLGV), and N127.

As to quaternary structure, homodimer.

The catalysed reaction is L-methionine sulfoximine + acetyl-CoA = N-acetyl-L-methionine sulfoximine + CoA + H(+). It carries out the reaction L-methionine sulfone + acetyl-CoA = N-acetyl-L-methionine sulfone + CoA + H(+). Plays a role in the resistance against the toxic effects of L-methionine sulfoximine (MSX), a rare amino acid, which inhibits glutamine synthetase (GlnA). Catalyzes the acetylation of L-methionine sulfoximine (MSX). It can also use L-methionine sulfone (MSO). This chain is L-methionine sulfoximine/L-methionine sulfone acetyltransferase, found in Pseudomonas paraeruginosa (strain DSM 24068 / PA7) (Pseudomonas aeruginosa (strain PA7)).